Consider the following 365-residue polypeptide: Histidinol-phosphate aminotransferase (365 aa).

Lysine 223 carries the post-translational modification N6-(pyridoxal phosphate)lysine.

The protein belongs to the class-II pyridoxal-phosphate-dependent aminotransferase family. Histidinol-phosphate aminotransferase subfamily. In terms of assembly, homodimer. It depends on pyridoxal 5'-phosphate as a cofactor.

It catalyses the reaction L-histidinol phosphate + 2-oxoglutarate = 3-(imidazol-4-yl)-2-oxopropyl phosphate + L-glutamate. It participates in amino-acid biosynthesis; L-histidine biosynthesis; L-histidine from 5-phospho-alpha-D-ribose 1-diphosphate: step 7/9. This chain is Histidinol-phosphate aminotransferase, found in Bacillus pumilus (strain SAFR-032).